An 88-amino-acid chain; its full sequence is Putative membrane protein insertion efficiency factor (88 aa).

This sequence belongs to the UPF0161 family.

The protein localises to the cell inner membrane. Could be involved in insertion of integral membrane proteins into the membrane. This Burkholderia vietnamiensis (strain G4 / LMG 22486) (Burkholderia cepacia (strain R1808)) protein is Putative membrane protein insertion efficiency factor.